A 362-amino-acid chain; its full sequence is Epoxyqueuosine reductase (362 aa).

The active-site Proton donor is the D143. One can recognise a 4Fe-4S ferredoxin-type domain in the interval 191 to 220 (PDSPKHQDSCGKCQACIKLCPTGAIQPGKM). [4Fe-4S] cluster contacts are provided by C200, C203, C206, C210, C226, C253, C256, and C260.

Belongs to the QueG family. Monomer. Requires cob(II)alamin as cofactor. It depends on [4Fe-4S] cluster as a cofactor.

The protein localises to the cytoplasm. The enzyme catalyses epoxyqueuosine(34) in tRNA + AH2 = queuosine(34) in tRNA + A + H2O. It functions in the pathway tRNA modification; tRNA-queuosine biosynthesis. In terms of biological role, catalyzes the conversion of epoxyqueuosine (oQ) to queuosine (Q), which is a hypermodified base found in the wobble positions of tRNA(Asp), tRNA(Asn), tRNA(His) and tRNA(Tyr). The sequence is that of Epoxyqueuosine reductase from Francisella cf. novicida (strain Fx1).